The following is a 198-amino-acid chain: Large ribosomal subunit protein eL18 (198 aa).

The tract at residues 157-198 (RHFGASGVPGSHSKPYATNRGKETKRGRRTGRSYKRKAFRHV) is disordered. Positions 179 to 198 (ETKRGRRTGRSYKRKAFRHV) are enriched in basic residues.

Belongs to the eukaryotic ribosomal protein eL18 family.

It localises to the cytoplasm. The sequence is that of Large ribosomal subunit protein eL18 (RPL18-A) from Leishmania major.